Reading from the N-terminus, the 133-residue chain is Fatty acid-binding protein homolog 2 (133 aa).

A fatty acid-binding positions include arginine 107 and 127 to 129 (RTY).

The protein belongs to the calycin superfamily. Fatty-acid binding protein (FABP) family.

Its function is as follows. May play a role in the acquisition, storage, and transport of lipids, and may be important to the organism since it is incapable of synthesizing most of its lipids de novo. This Echinococcus granulosus (Hydatid tapeworm) protein is Fatty acid-binding protein homolog 2 (FABP2).